Reading from the N-terminus, the 383-residue chain is Acetylornithine deacetylase (383 aa).

Residue His-80 participates in Zn(2+) binding. Asp-82 is an active-site residue. Asp-112 provides a ligand contact to Zn(2+). Glu-144 is an active-site residue. Glu-145, Glu-169, and His-355 together coordinate Zn(2+).

This sequence belongs to the peptidase M20A family. ArgE subfamily. As to quaternary structure, homodimer. Requires Zn(2+) as cofactor. The cofactor is Co(2+). It depends on glutathione as a cofactor.

The protein localises to the cytoplasm. It catalyses the reaction N(2)-acetyl-L-ornithine + H2O = L-ornithine + acetate. Its pathway is amino-acid biosynthesis; L-arginine biosynthesis; L-ornithine from N(2)-acetyl-L-ornithine (linear): step 1/1. In terms of biological role, catalyzes the hydrolysis of the amide bond of N(2)-acetylated L-amino acids. Cleaves the acetyl group from N-acetyl-L-ornithine to form L-ornithine, an intermediate in L-arginine biosynthesis pathway, and a branchpoint in the synthesis of polyamines. This chain is Acetylornithine deacetylase, found in Shigella boydii serotype 18 (strain CDC 3083-94 / BS512).